The primary structure comprises 360 residues: 3-isopropylmalate dehydrogenase (360 aa).

Residues 66 to 75 show a composition bias toward basic residues; it reads RCHPARRRRR. The segment at 66–101 is disordered; the sequence is RCHPARRRRRSEMGRHRPGHPPGARPAENPFATGPV. Substrate contacts are provided by Arg133 and Asp223. Mg(2+) contacts are provided by Asp223, Asp247, and Asp251.

It belongs to the isocitrate and isopropylmalate dehydrogenases family. LeuB type 1 subfamily. Homodimer. Mg(2+) serves as cofactor. The cofactor is Mn(2+).

The protein localises to the cytoplasm. The enzyme catalyses (2R,3S)-3-isopropylmalate + NAD(+) = 4-methyl-2-oxopentanoate + CO2 + NADH. The protein operates within amino-acid biosynthesis; L-leucine biosynthesis; L-leucine from 3-methyl-2-oxobutanoate: step 3/4. Its function is as follows. Catalyzes the oxidation of 3-carboxy-2-hydroxy-4-methylpentanoate (3-isopropylmalate) to 3-carboxy-4-methyl-2-oxopentanoate. The product decarboxylates to 4-methyl-2 oxopentanoate. This is 3-isopropylmalate dehydrogenase (leuB) from Azotobacter vinelandii.